Reading from the N-terminus, the 687-residue chain is Transketolase 2 (687 aa).

Histidine 47 lines the substrate pocket. Residues histidine 87 and 135-137 (GPL) contribute to the thiamine diphosphate site. Aspartate 176 contributes to the Mg(2+) binding site. Residues glycine 177 and asparagine 206 each coordinate thiamine diphosphate. Mg(2+) contacts are provided by asparagine 206 and isoleucine 208. Substrate is bound by residues histidine 282, arginine 379, and serine 406. A thiamine diphosphate-binding site is contributed by histidine 282. Glutamate 432 (proton donor) is an active-site residue. Position 458 (phenylalanine 458) interacts with thiamine diphosphate. 4 residues coordinate substrate: histidine 482, aspartate 490, histidine 494, and arginine 541.

The protein belongs to the transketolase family. Mg(2+) serves as cofactor. Requires thiamine diphosphate as cofactor.

It catalyses the reaction D-sedoheptulose 7-phosphate + D-glyceraldehyde 3-phosphate = aldehydo-D-ribose 5-phosphate + D-xylulose 5-phosphate. With respect to regulation, activity is increased sixfold following autotrophic growth on methanol compared with that of heterotrophically grown cells. In terms of biological role, catalyzes the transfer of a two-carbon ketol group from a ketose donor to an aldose acceptor, via a covalent intermediate with the cofactor thiamine pyrophosphate. The chain is Transketolase 2 from Xanthobacter flavus.